The chain runs to 412 residues: Alanyl-tRNA editing protein Aarsd1 (412 aa).

Positions 109 and 113 each coordinate Zn(2+). The residue at position 174 (Ser174) is a Phosphoserine. Zn(2+)-binding residues include Cys209 and His213.

This sequence belongs to the class-II aminoacyl-tRNA synthetase family. Alax-L subfamily. Zn(2+) is required as a cofactor.

It is found in the cytoplasm. Functions in trans to edit the amino acid moiety from incorrectly charged tRNA(Ala). The chain is Alanyl-tRNA editing protein Aarsd1 (Aarsd1) from Rattus norvegicus (Rat).